We begin with the raw amino-acid sequence, 183 residues long: Deoxyuridine 5'-triphosphate nucleotidohydrolase (183 aa).

Substrate is bound by residues 67–69 (RSG), Asn80, 84–86 (TID), and Lys94. Residues 138 to 183 (RAEGGFGSTGGHAGLDPASGTSGQVAEGGPTGGNRYASVVSDREGQ) form a disordered region. Over residues 141–150 (GGFGSTGGHA) the composition is skewed to gly residues.

It belongs to the dUTPase family. Mg(2+) serves as cofactor.

The enzyme catalyses dUTP + H2O = dUMP + diphosphate + H(+). It functions in the pathway pyrimidine metabolism; dUMP biosynthesis; dUMP from dCTP (dUTP route): step 2/2. Its function is as follows. This enzyme is involved in nucleotide metabolism: it produces dUMP, the immediate precursor of thymidine nucleotides and it decreases the intracellular concentration of dUTP so that uracil cannot be incorporated into DNA. This chain is Deoxyuridine 5'-triphosphate nucleotidohydrolase, found in Streptomyces coelicolor (strain ATCC BAA-471 / A3(2) / M145).